The chain runs to 202 residues: Prephenate decarboxylase (202 aa).

The protein belongs to the prephenate decarboxylase family.

The enzyme catalyses prephenate + H(+) = 3-[(4R)-4-hydroxycyclohexa-1,5-dien-1-yl]-2-oxopropanoate + CO2. Its function is as follows. In vivo, involved in the biosynthesis of 2-carboxy-6-hydroxyoctahydroindole (Choi) present in the nonribosomal glycopeptides aeruginoside 126A and B. AerD is an unusual prephenate decarboxylase that avoids the typical aromatization of the cyclohexadienol ring of prephenate. AerD catalyzes the protonation at C8 followed by decarboxylation to produce the dihydro-4-hydroxyphenylpyruvate regioisomer A258 (H2HPP A258)(3-(4-hydroxycyclohexa- 1,5-dienyl)-2-oxopropanoic acid), which is able to undergo a nonenzymatic isomerization to produce dihydro-4-hydroxyphenylpyruvate regioisomer A295 (H2HPP A295)(3-(4-hydroxycyclohex-2-enylidene)-2-oxopropanoic acid). The chain is Prephenate decarboxylase from Planktothrix agardhii (strain NIVA-CYA 126/8).